The chain runs to 618 residues: Chaperone protein HscA homolog (618 aa).

Belongs to the heat shock protein 70 family.

Functionally, chaperone involved in the maturation of iron-sulfur cluster-containing proteins. Has a low intrinsic ATPase activity which is markedly stimulated by HscB. The sequence is that of Chaperone protein HscA homolog from Methylibium petroleiphilum (strain ATCC BAA-1232 / LMG 22953 / PM1).